The chain runs to 287 residues: Aquaporin PIP2-1 (287 aa).

An N-acetylmethionine modification is found at Met1. The Cytoplasmic segment spans residues 2–39 (AKDVEAVPGEGFQTRDYQDPPPAPFIDGAELKKWSFYR). Lys3 bears the N6,N6-dimethyllysine; partial mark. The chain crosses the membrane as a helical span at residues 40-60 (AVIAEFVATLLFLYITVLTVI). At 61-83 (GYKIQSDTDAGGVDCGGVGILGI) the chain is on the extracellular side. A helical membrane pass occupies residues 84-104 (AWAFGGMIFILVYCTAGISGG). The Cytoplasmic portion of the chain corresponds to 105–125 (HINPAVTFGLFLARKVSLPRA). Positions 107–109 (NPA) match the NPA 1 motif. Residues 126–146 (LLYIIAQCLGAICGVGFVKAF) traverse the membrane as a helical segment. The Extracellular segment spans residues 147 to 167 (QSSYYTRYGGGANSLADGYST). The chain crosses the membrane as a helical span at residues 168 to 188 (GTGLAAEIIGTFVLVYTVFSA). Topologically, residues 189 to 201 (TDPKRSARDSHVP) are cytoplasmic. Residues 202-222 (VLAPLPIGFAVFMVHLATIPI) form a helical membrane-spanning segment. Over 223–249 (TGTGINPARSFGAAVIYNKSKPWDDHW) the chain is Extracellular. The short motif at 228–230 (NPA) is the NPA 2 element. A helical membrane pass occupies residues 250–270 (IFWVGPFIGAAIAAFYHQFVL). The Cytoplasmic segment spans residues 271 to 287 (RASGSKSLGSFRSAANV). Ser280 and Ser283 each carry phosphoserine.

The protein belongs to the MIP/aquaporin (TC 1.A.8) family. PIP (TC 1.A.8.11) subfamily. Ubiquitinated by RMA1, leading to proteasomal degradation. Post-translationally, the phosphorylation at Ser-280 and Ser-283 is altered by salt (NaCl) and hydrogen peroxide H(2)O(2) treatments. Phosphorylation of Ser-283 is required for plasma membrane targeting. As to expression, predominantly expressed in roots and green siliques. Also expressed at lower level above ground and in flower buds.

It is found in the cell membrane. Functionally, water channel required to facilitate the transport of water across cell membrane. Probably involved in root water uptake. Its function is impaired by Hg(2+). The chain is Aquaporin PIP2-1 (PIP2-1) from Arabidopsis thaliana (Mouse-ear cress).